A 553-amino-acid chain; its full sequence is Cysteine desulfurase IscS (553 aa).

Residues 102–122 (NNISSNNTQYNNNSSNSGSLN) show a composition bias toward low complexity. Residues 102–125 (NNISSNNTQYNNNSSNSGSLNDEG) form a disordered region.

This sequence belongs to the class-V pyridoxal-phosphate-dependent aminotransferase family. NifS/IscS subfamily. In terms of assembly, homotetramer. Interacts with Isd11; the interaction enhances cysteine desulfurase activity of IscS. Interacts with IscU. Component of a complex, at least composed of IscS, Isd11 and IscU. Pyridoxal 5'-phosphate serves as cofactor.

The protein resides in the mitochondrion. It carries out the reaction (sulfur carrier)-H + L-cysteine = (sulfur carrier)-SH + L-alanine. The protein operates within cofactor biosynthesis; iron-sulfur cluster biosynthesis. Catalyzes sulfur activation and mobilization in iron-sulfur cluster formation (ISC) pathway for iron-sulfur (Fe-S) cluster biogenesis. Active when in complex with a partner protein Isd11. The chain is Cysteine desulfurase IscS from Plasmodium falciparum (isolate 3D7).